A 418-amino-acid chain; its full sequence is MTLLALGINHKTAPVSLRERVTFSPDTLDQALDSLLAQPMVQGGVVLSTCNRTELYLSVEEQDNLQEALIRWLCDYHNLNEDDLRNSLYWHQDNDAVSHLMRVASGLDSLVLGEPQILGQVKKAFADSQKGHLNASALERMFQKSFSVAKRVRTETDIGASAVSVAFAACTLARQIFESLSTVTVLLVGAGETIELVARHLREHKVQKMIIANRTRERAQALADEVGAEVISLSDIDARLQDADIIISSTASPLPIIGKGMVERALKSRRNQPMLLVDIAVPRDVEPEVGKLANAYLYSVDDLQSIISHNLVQRQAAAVEAETIVEQEASEFMAWLRAQGASETIREYRSQSEQIRDELTTKALSALQQGGDAQAILQDLAWKLTNRLIHAPTKSLQQAARDGDDERLNILRDSLGLE.

Substrate-binding positions include 49–52 (TCNR), serine 109, 114–116 (EPQ), and glutamine 120. Residue cysteine 50 is the Nucleophile of the active site. Residue 189-194 (GAGETI) participates in NADP(+) binding.

Belongs to the glutamyl-tRNA reductase family. As to quaternary structure, homodimer.

It catalyses the reaction (S)-4-amino-5-oxopentanoate + tRNA(Glu) + NADP(+) = L-glutamyl-tRNA(Glu) + NADPH + H(+). It participates in porphyrin-containing compound metabolism; protoporphyrin-IX biosynthesis; 5-aminolevulinate from L-glutamyl-tRNA(Glu): step 1/2. Functionally, catalyzes the NADPH-dependent reduction of glutamyl-tRNA(Glu) to glutamate 1-semialdehyde (GSA). The chain is Glutamyl-tRNA reductase from Salmonella choleraesuis (strain SC-B67).